The sequence spans 93 residues: MPRSLKKGPFVDDHLLKKVDLQNSKGTKHVIKTWSRRSTVIPDMLGHTIAVHDGRKHVPVFITEGMVGHKLGEFAPTRTFRGHVKEDRRSRRG.

Belongs to the universal ribosomal protein uS19 family.

Its function is as follows. Protein S19 forms a complex with S13 that binds strongly to the 16S ribosomal RNA. The protein is Small ribosomal subunit protein uS19 of Frankia casuarinae (strain DSM 45818 / CECT 9043 / HFP020203 / CcI3).